Consider the following 462-residue polypeptide: Sensor histidine kinase RegB (462 aa).

Residues 1-25 are Cytoplasmic-facing; it reads MILGPDGILNRDTRGDWWRLRTLIL. A helical membrane pass occupies residues 26 to 45; the sequence is LRWMAVAGQLAAIVVTDWYL. The Extracellular segment spans residues 46 to 51; sequence GVRLPM. Residues 52–70 traverse the membrane as a helical segment; that stretch reads GLCFMAVGASVIANVIATF. Over 71 to 78 the chain is Cytoplasmic; the sequence is VFPQNRRL. The helical transmembrane segment at 79–96 threads the bilayer; sequence TEFQALMILLFDLTQLSF. Over 97–103 the chain is Extracellular; sequence LLFLTGG. Residues 104–123 traverse the membrane as a helical segment; that stretch reads LTNPFALLILAPVTISGVAL. At 124–129 the chain is on the cytoplasmic side; sequence DVRTTV. Residues 130 to 149 form a helical membrane-spanning segment; it reads ILGAIAIGLLTFTAYFHLPL. Residues 150–164 are Extracellular-facing; it reads ILADGSSLSVPRMFE. A helical membrane pass occupies residues 165–182; it reads FGFWLAIVIGILFLGLYS. Residues 183 to 462 are Cytoplasmic-facing; that stretch reads RRVAIEIRSM…PLGENVLIQT (280 aa). One can recognise a Histidine kinase domain in the interval 218–445; the sequence is AAAHELGTPL…IVEVIWPVDR (228 aa). His-221 bears the Phosphohistidine; by autocatalysis mark.

The protein resides in the cell inner membrane. It catalyses the reaction ATP + protein L-histidine = ADP + protein N-phospho-L-histidine.. Functionally, member of the two-component regulatory system RegB/RegA. Involved in the positive regulation of photosynthesis gene expression in response to anaerobiosis. Also involved in positive regulation of the cbbI and cbbII Calvin cycle CO2 fixation operons, as well as in regulation of expression of genes involved in alternative CO2 fixation pathways. Phosphorylates RegA/PrrA. The sequence is that of Sensor histidine kinase RegB (regB) from Cereibacter sphaeroides (Rhodobacter sphaeroides).